A 328-amino-acid polypeptide reads, in one-letter code: NADH:quinone reductase (328 aa).

FMN-binding positions include 22–24, Thr75, Lys124, Ala150, 178–180, and 201–202; these read GMQ, SGG, and GT.

It belongs to the nitronate monooxygenase family. Monomer. FMN serves as cofactor.

The catalysed reaction is a quinone + NADH + H(+) = a quinol + NAD(+). Functionally, catalyzes the NADH-dependent reduction of a broad spectrum of quinone substrates, generating the corresponding hydroquinones. Highly prefers NADH to NADPH as a reducing substrate. Also displays a small NADH oxidase activity. Does not exhibit nitronate monooxygenase activity; is inactive against propionate 3-nitronate, 3-nitropropionate, nitroethane, 1-nitropropane, 2-nitropropane, and the anionic forms ethylnitronate, propyl-1-nitronate, and propyl-2-nitronate. Has no azoreductase activity since it is not able to reduce the azo dye methyl red with NADH. May be required to maintain an appropriate [NAD(+)]/[NADH] ratio for the catabolism of fatty acids in P.aeruginosa PAO1. The protein is NADH:quinone reductase of Pseudomonas aeruginosa (strain ATCC 15692 / DSM 22644 / CIP 104116 / JCM 14847 / LMG 12228 / 1C / PRS 101 / PAO1).